A 467-amino-acid polypeptide reads, in one-letter code: MSPQTETKASVGFKAGVKDYKLTYYTPDYETKDTDILAAFRVTPQPGVPPEEAGAAVAAESSTGTWTTVWTDGLTSLDRYKGRCYHIETVVGEENQYIAYVAYPLDLFEEGSVTNMFTSIVGNVFGFKALRALRLEDLRIPTSYSKTFQGPPHGIQVERDKLNKYGRPLLGCTIKPKLGLSAKNYGRAVYECLRGGLDFTKDDENVNSQPFMRWRDRFLFCAEALYKAQAETGEIKGHYLNATAGTCEEMMKRAMCARELGVPIVMHDYLTGGFTANTSLAHYCRDNGLLLHIHRAMHAVIDRQKNHGMHFRVLAKALRMSGGDHIHAGTVVGKLEGEREMTLGFVDLLRDDFIEKDRSRGIFFTQDWVSMPGVLPVASGGIHVWHMPALTEIFGDDSVLQFGGGTLGHPWGNAPGAVANRVALEACVQARNEGRDLAREGNEIIREASKWSPELAAACEVWKAIKF.

Residues 1–2 constitute a propeptide that is removed on maturation; sequence MS. P3 bears the N-acetylproline mark. Position 14 is an N6,N6,N6-trimethyllysine (K14). Substrate-binding residues include N123 and T173. The active-site Proton acceptor is K175. K177 serves as a coordination point for substrate. Residues K201, D203, and E204 each coordinate Mg(2+). K201 is modified (N6-carboxylysine). The active-site Proton acceptor is H294. Residues R295, H327, and S379 each coordinate substrate.

This sequence belongs to the RuBisCO large chain family. Type I subfamily. Heterohexadecamer of 8 large chains and 8 small chains; disulfide-linked. The disulfide link is formed within the large subunit homodimers. Mg(2+) is required as a cofactor. The disulfide bond which can form in the large chain dimeric partners within the hexadecamer appears to be associated with oxidative stress and protein turnover.

It is found in the plastid. It localises to the chloroplast. It carries out the reaction 2 (2R)-3-phosphoglycerate + 2 H(+) = D-ribulose 1,5-bisphosphate + CO2 + H2O. It catalyses the reaction D-ribulose 1,5-bisphosphate + O2 = 2-phosphoglycolate + (2R)-3-phosphoglycerate + 2 H(+). RuBisCO catalyzes two reactions: the carboxylation of D-ribulose 1,5-bisphosphate, the primary event in carbon dioxide fixation, as well as the oxidative fragmentation of the pentose substrate in the photorespiration process. Both reactions occur simultaneously and in competition at the same active site. The polypeptide is Ribulose bisphosphate carboxylase large chain (Phoenix reclinata (Senegal date palm)).